The following is a 115-amino-acid chain: NADH-ubiquinone oxidoreductase chain 3 (115 aa).

Helical transmembrane passes span Leu-3–Trp-23, Phe-55–Leu-75, and Val-87–Ile-107.

Belongs to the complex I subunit 3 family. In terms of assembly, core subunit of respiratory chain NADH dehydrogenase (Complex I) which is composed of 45 different subunits. Interacts with TMEM186. Interacts with TMEM242.

The protein resides in the mitochondrion inner membrane. It catalyses the reaction a ubiquinone + NADH + 5 H(+)(in) = a ubiquinol + NAD(+) + 4 H(+)(out). In terms of biological role, core subunit of the mitochondrial membrane respiratory chain NADH dehydrogenase (Complex I) which catalyzes electron transfer from NADH through the respiratory chain, using ubiquinone as an electron acceptor. Essential for the catalytic activity of complex I. The chain is NADH-ubiquinone oxidoreductase chain 3 from Oryctolagus cuniculus (Rabbit).